The sequence spans 187 residues: CRISPR system Cmr subunit Cmr1-2 (187 aa).

This sequence belongs to the CRISPR system Cmr1 family. In terms of assembly, part of the type III-B Cmr ribonucleoprotein (RNP) complex. This is an elongated RNP with Cmr2 and Cmr3 as the base, with Cmr4 and Cmr5 forming a helical core along the mature crRNA (39 or 45 nt in length), while the complex is capped by Cmr6 and Cmr1. The 5' end of the crRNA is bound to Cmr2 and Cmr3, while Cmr6 and a Cmr1 subunit (Cmr1-1 or Cmr1-2) cap the 3' end of the crRNA. The target RNA lies antiparallel to the crRNA, with its 5' end near Cmr1 and Cmr6 and its 3' end near Cmr2 and Cmr3; major target cleavage occurs nears the junction of Cmr1/Cmr6 and Cmr4/Cmr, with minor cleavage occurring at 6 nt intervals which coincide with the proposed spacing of Cmr4 subunits.

It is found in the cytoplasm. Functionally, CRISPR (clustered regularly interspaced short palindromic repeat), is an adaptive immune system that provides protection against mobile genetic elements (viruses, transposable elements and conjugative plasmids). CRISPR clusters contain sequences complementary to antecedent mobile elements and target invading nucleic acids. CRISPR clusters are transcribed and processed into CRISPR RNA (crRNA), formerly called psiRNA (prokaryotic silencing) in this organism. Part of the Cmr ribonucleoprotein complex which has divalent cation-dependent endoribonuclease activity specific for ssRNA complementary to the crRNA (target RNA), generating 5' hydroxy- and 3' phosphate or 2'-3' cyclic phosphate termini. Cmr4 is probably the subunit that cleaves target RNA. Cmr complex does not cleave ssDNA complementary to the crRNA. Cleavage of invading RNA is guided by the crRNA; substrate cleavage occurs a fixed distance (14 nt) from the 3' end of the crRNA. In vitro reconstitution shows Cmr1-2 and Cmr5 are not absolutely necessary for target cleavage. The polypeptide is CRISPR system Cmr subunit Cmr1-2 (Pyrococcus furiosus (strain ATCC 43587 / DSM 3638 / JCM 8422 / Vc1)).